An 855-amino-acid polypeptide reads, in one-letter code: DNA mismatch repair protein MutS (855 aa).

616–623 (GPNMGGKS) contacts ATP.

Belongs to the DNA mismatch repair MutS family.

Its function is as follows. This protein is involved in the repair of mismatches in DNA. It is possible that it carries out the mismatch recognition step. This protein has a weak ATPase activity. The polypeptide is DNA mismatch repair protein MutS (Salmonella gallinarum (strain 287/91 / NCTC 13346)).